The sequence spans 456 residues: UDP-N-acetylglucosamine 1-carboxyvinyltransferase (456 aa).

34–35 (KN) lines the phosphoenolpyruvate pocket. Arg-104 lines the UDP-N-acetyl-alpha-D-glucosamine pocket. Cys-128 functions as the Proton donor in the catalytic mechanism. Cys-128 bears the 2-(S-cysteinyl)pyruvic acid O-phosphothioketal mark. 2 residues coordinate UDP-N-acetyl-alpha-D-glucosamine: Asp-319 and Ile-341.

This sequence belongs to the EPSP synthase family. MurA subfamily.

Its subcellular location is the cytoplasm. The enzyme catalyses phosphoenolpyruvate + UDP-N-acetyl-alpha-D-glucosamine = UDP-N-acetyl-3-O-(1-carboxyvinyl)-alpha-D-glucosamine + phosphate. It participates in cell wall biogenesis; peptidoglycan biosynthesis. In terms of biological role, cell wall formation. Adds enolpyruvyl to UDP-N-acetylglucosamine. This Prochlorococcus marinus (strain MIT 9301) protein is UDP-N-acetylglucosamine 1-carboxyvinyltransferase.